The chain runs to 173 residues: Ribosome maturation factor RimM (173 aa).

Residues 102-173 form the PRC barrel domain; sequence EGEYYWSDLI…TMLVDWDPEF (72 aa).

Belongs to the RimM family. Binds ribosomal protein uS19.

The protein localises to the cytoplasm. Its function is as follows. An accessory protein needed during the final step in the assembly of 30S ribosomal subunit, possibly for assembly of the head region. Essential for efficient processing of 16S rRNA. May be needed both before and after RbfA during the maturation of 16S rRNA. It has affinity for free ribosomal 30S subunits but not for 70S ribosomes. This is Ribosome maturation factor RimM from Methylobacillus flagellatus (strain ATCC 51484 / DSM 6875 / VKM B-1610 / KT).